A 344-amino-acid chain; its full sequence is Protein-glutamate methylesterase/protein-glutamine glutaminase (344 aa).

Positions 7-124 (RVLVVDDSAF…SLTFRQVAPE (118 aa)) constitute a Response regulatory domain. 4-aspartylphosphate is present on D58. Positions 154-344 (PAVSGKIVVI…KIPEKLIELV (191 aa)) constitute a CheB-type methylesterase domain. Active-site residues include S166, H193, and D289.

This sequence belongs to the CheB family. Post-translationally, phosphorylated by CheA. Phosphorylation of the N-terminal regulatory domain activates the methylesterase activity.

The protein resides in the cytoplasm. It catalyses the reaction [protein]-L-glutamate 5-O-methyl ester + H2O = L-glutamyl-[protein] + methanol + H(+). The enzyme catalyses L-glutaminyl-[protein] + H2O = L-glutamyl-[protein] + NH4(+). Involved in chemotaxis. Part of a chemotaxis signal transduction system that modulates chemotaxis in response to various stimuli. Catalyzes the demethylation of specific methylglutamate residues introduced into the chemoreceptors (methyl-accepting chemotaxis proteins or MCP) by CheR. Also mediates the irreversible deamidation of specific glutamine residues to glutamic acid. This chain is Protein-glutamate methylesterase/protein-glutamine glutaminase, found in Thermotoga maritima (strain ATCC 43589 / DSM 3109 / JCM 10099 / NBRC 100826 / MSB8).